Consider the following 412-residue polypeptide: CinA-like protein (412 aa).

Belongs to the CinA family.

In Kosmotoga olearia (strain ATCC BAA-1733 / DSM 21960 / TBF 19.5.1), this protein is CinA-like protein.